The sequence spans 462 residues: Hyaluronidase-1 (462 aa).

Positions 1–52 (MLGLTQHAQKVWRMKPFSPEVSPGSSPATAGHLLRISTLFLTLLELAQVCRG) are cleaved as a signal peptide. Intrachain disulfides connect Cys-71/Cys-361 and Cys-235/Cys-249. Residues Asn-98 and Asn-127 are each glycosylated (N-linked (GlcNAc...) asparagine). Catalysis depends on Glu-159, which acts as the Proton donor. Residues Asn-244, Asn-265, and Asn-378 are each glycosylated (N-linked (GlcNAc...) asparagine). 3 cysteine pairs are disulfide-bonded: Cys-386-Cys-397, Cys-391-Cys-446, and Cys-448-Cys-457. Residues 446 to 457 (CRCYRGWRGKWC) enclose the EGF-like domain.

Belongs to the glycosyl hydrolase 56 family. Highly expressed in liver, kidney, lung and skin.

It is found in the secreted. Its subcellular location is the lysosome. The catalysed reaction is Random hydrolysis of (1-&gt;4)-linkages between N-acetyl-beta-D-glucosamine and D-glucuronate residues in hyaluronate.. In terms of biological role, may have a role in promoting tumor progression. May block the TGFB1-enhanced cell growth. The chain is Hyaluronidase-1 (Hyal1) from Mus musculus (Mouse).